The following is a 331-amino-acid chain: Protein REVEILLE 6 (331 aa).

Residues T67–Q121 form the HTH myb-type domain. The H-T-H motif DNA-binding region spans W94 to F117. 3 disordered regions span residues K122–D166, L203–G237, and S309–T331. A compositionally biased stretch (polar residues) spans V150–N165. Residues N211–N220 are compositionally biased toward low complexity. Composition is skewed to basic and acidic residues over residues S226–N235 and L322–T331.

The protein resides in the nucleus. Probable transcription factor. RVE4, RVE6 and RVE8 are components of the circadian system acting synergistically to regulate flowering time, redundantly to regulate leaf growth, and antagonistically to regulate hypocotyl elongation; their action seems independent of ZTL and HY5. This chain is Protein REVEILLE 6, found in Arabidopsis thaliana (Mouse-ear cress).